Consider the following 757-residue polypeptide: Neutral ceramidase 2 (757 aa).

Residues 1–25 (MAVSLPLFQFILFLLLLLLSRTVYA) form the signal peptide. N-linked (GlcNAc...) asparagine glycosylation is present at asparagine 311. The active-site Nucleophile is serine 330. Asparagine 348 and asparagine 657 each carry an N-linked (GlcNAc...) asparagine glycan.

This sequence belongs to the neutral ceramidase family.

The protein resides in the secreted. It localises to the endoplasmic reticulum. The protein localises to the golgi apparatus. It carries out the reaction an N-acylsphing-4-enine + H2O = sphing-4-enine + a fatty acid. Functionally, hydrolyzes the sphingolipid ceramide into sphingosine and free fatty acid. The chain is Neutral ceramidase 2 from Arabidopsis thaliana (Mouse-ear cress).